A 102-amino-acid polypeptide reads, in one-letter code: MHIKKGDKVIVITGKDKGKTGTVIEALPKRDRVVVEGVNIVKKHQKPTQMNPEGGITEFEAAIHVSNVMLLDPKTNKPTRVGTKIEDGKKVRVAKKSGEIIK.

Belongs to the universal ribosomal protein uL24 family. Part of the 50S ribosomal subunit.

Functionally, one of two assembly initiator proteins, it binds directly to the 5'-end of the 23S rRNA, where it nucleates assembly of the 50S subunit. One of the proteins that surrounds the polypeptide exit tunnel on the outside of the subunit. This chain is Large ribosomal subunit protein uL24, found in Macrococcus caseolyticus (strain JCSC5402) (Macrococcoides caseolyticum).